The sequence spans 1192 residues: Methionine synthase (1192 aa).

One can recognise a Hcy-binding domain in the interval 1–312 (MTAADKHLYD…AHIREVAAAV (312 aa)). Zn(2+) is bound by residues Cys231, Cys297, and Cys298. The Pterin-binding domain maps to 343 to 601 (VLVIGERTNA…RIPEEQRNVA (259 aa)). Residues 635–728 (RLAELAGLPL…HMERSDDDSG (94 aa)) form the B12-binding N-terminal domain. One can recognise a B12-binding domain in the interval 729-866 (KGRIVLATVK…SAKRGEAPDE (138 aa)). Residues 739 to 743 (GDVHD), His742, Ser787, and Ala845 each bind methylcob(III)alamin. The disordered stretch occupies residues 860-904 (RGEAPDENSPEAIKAREKEAERKARHQRSKRIAAQRKAAEEPVEV). Basic and acidic residues predominate over residues 872–881 (IKAREKEAER). Residues 882–893 (KARHQRSKRIAA) are compositionally biased toward basic residues. The AdoMet activation domain maps to 893–1192 (AQRKAAEEPV…HHPEAKYFNV (300 aa)). Residues Asp940, Arg1135, and 1189–1190 (YF) contribute to the S-adenosyl-L-methionine site.

Belongs to the vitamin-B12 dependent methionine synthase family. It depends on methylcob(III)alamin as a cofactor. Zn(2+) is required as a cofactor.

The catalysed reaction is (6S)-5-methyl-5,6,7,8-tetrahydrofolate + L-homocysteine = (6S)-5,6,7,8-tetrahydrofolate + L-methionine. The protein operates within amino-acid biosynthesis; L-methionine biosynthesis via de novo pathway; L-methionine from L-homocysteine (MetH route): step 1/1. In terms of biological role, catalyzes the transfer of a methyl group from methyl-cobalamin to homocysteine, yielding enzyme-bound cob(I)alamin and methionine. Subsequently, remethylates the cofactor using methyltetrahydrofolate. The protein is Methionine synthase (metH) of Mycobacterium tuberculosis (strain ATCC 25618 / H37Rv).